The primary structure comprises 385 residues: Centrosomal protein of 44 kDa (385 aa).

The interval 11 to 192 (RNLEQVLRSL…GANIPEDTVT (182 aa)) is binds with microtubules and centrioles. Residues 126–154 (LEKTPSQQRKKTSSAKSEPCSSTEKTSTE) are disordered. A compositionally biased stretch (polar residues) spans 139–154 (SAKSEPCSSTEKTSTE). Positions 230–271 (EVTALQSMLAECQEKLKKLTCIESRLESLEEKMKGKVLVNEK) form a coiled coil. The interval 303 to 348 (SEDYSSSSDMDSLNPDRKSKEERHANIPLSSGYSTVSSDSTPRTST) is disordered. The segment covering 305 to 314 (DYSSSSDMDS) has biased composition (low complexity). Residues 316–327 (NPDRKSKEERHA) are compositionally biased toward basic and acidic residues. Over residues 332–342 (SSGYSTVSSDS) the composition is skewed to low complexity. Phosphoserine is present on Ser342. Position 343 is a phosphothreonine (Thr343). Residues 358–381 (SEETTMQKMERMKKMFEETAELLK) are a coiled coil.

As to quaternary structure, interacts with CROCC. Interacts with POC1B; the interaction is direct and recruits POC1B to centriolar microtubules. Binds to centriolar microtubules.

It is found in the cytoplasm. The protein localises to the cytoskeleton. The protein resides in the microtubule organizing center. It localises to the centrosome. Its subcellular location is the centriole. It is found in the spindle pole. The protein localises to the midbody. Its function is as follows. Centriole-enriched microtubule-binding protein involved in centriole biogenesis. In collaboration with CEP295 and POC1B, is required for the centriole-to-centrosome conversion by ensuring the formation of bona fide centriole wall. Functions as a linker component that maintains centrosome cohesion. Associates with CROCC and regulates its stability and localization to the centrosome. In Bos taurus (Bovine), this protein is Centrosomal protein of 44 kDa (CEP44).